The following is a 463-amino-acid chain: D(5)-like dopamine receptor (463 aa).

The Extracellular segment spans residues 1 to 39 (MENFYNETEPTEPRGGVDPLRVVTAAEDVPAPVGGVSVR). Asparagine 6 carries N-linked (GlcNAc...) asparagine glycosylation. The chain crosses the membrane as a helical span at residues 40–65 (ALTGCVLCALIVSTLLGNTLVCAAVI). The Cytoplasmic segment spans residues 66-76 (KFRHLRSKVTN). Residues 77–103 (AFVVSLAVSDLFVAVLVMPWRAVSEVA) form a helical membrane-spanning segment. Topologically, residues 104–112 (GVWLFGRFC) are extracellular. Cysteine 112 and cysteine 194 are disulfide-bonded. Residues 113 to 135 (DTWVAFDIMCSTASILNLCVISM) form a helical membrane-spanning segment. Topologically, residues 136-154 (DRYWAISNPFRYERRMTRR) are cytoplasmic. The helical transmembrane segment at 155-180 (FAFLMIAVAWTLSVLISFIPVQLNWH) threads the bilayer. Over 181–198 (RADNNSSAHEQGDCNASL) the chain is Extracellular. Residues 199–223 (NRTYAISSSLISFYIPVLIMVGTYT) form a helical membrane-spanning segment. Residues 224 to 273 (RIFRIAQTQIRRISSLERAAGQRAQNQSHRASTHDESALKTSFKRETKVL) are Cytoplasmic-facing. Residues 274–301 (KTLSVIMGVFVFCWLPFFVLNCVVPFCD) traverse the membrane as a helical segment. Topologically, residues 302–315 (VDKVGEPPCVSDTT) are extracellular. A helical transmembrane segment spans residues 316 to 337 (FNIFVWFGWANSSLNPVIYAFN). Residues 338-463 (ADFRKAFTTI…PGQIQDLGDL (126 aa)) are Cytoplasmic-facing.

Belongs to the G-protein coupled receptor 1 family.

The protein localises to the cell membrane. In terms of biological role, receptor for dopamine. This chain is D(5)-like dopamine receptor (dl), found in Takifugu rubripes (Japanese pufferfish).